We begin with the raw amino-acid sequence, 840 residues long: Protein translocase subunit SecA (840 aa).

Residues Q89, 107–111, and D514 each bind ATP; that span reads GEGKT.

Belongs to the SecA family. In terms of assembly, monomer and homodimer. Part of the essential Sec protein translocation apparatus which comprises SecA, SecYEG and auxiliary proteins SecDF-YajC and YidC.

It localises to the cell inner membrane. It is found in the cytoplasm. It catalyses the reaction ATP + H2O + cellular proteinSide 1 = ADP + phosphate + cellular proteinSide 2.. Part of the Sec protein translocase complex. Interacts with the SecYEG preprotein conducting channel. Has a central role in coupling the hydrolysis of ATP to the transfer of proteins into and across the cell membrane, serving as an ATP-driven molecular motor driving the stepwise translocation of polypeptide chains across the membrane. This is Protein translocase subunit SecA from Blochmanniella floridana.